We begin with the raw amino-acid sequence, 556 residues long: 2-succinyl-5-enolpyruvyl-6-hydroxy-3-cyclohexene-1-carboxylate synthase (556 aa).

The protein belongs to the TPP enzyme family. MenD subfamily. As to quaternary structure, homodimer. Mg(2+) is required as a cofactor. Mn(2+) serves as cofactor. The cofactor is thiamine diphosphate.

It catalyses the reaction isochorismate + 2-oxoglutarate + H(+) = 5-enolpyruvoyl-6-hydroxy-2-succinyl-cyclohex-3-ene-1-carboxylate + CO2. It functions in the pathway quinol/quinone metabolism; 1,4-dihydroxy-2-naphthoate biosynthesis; 1,4-dihydroxy-2-naphthoate from chorismate: step 2/7. Its pathway is quinol/quinone metabolism; menaquinone biosynthesis. Its function is as follows. Catalyzes the thiamine diphosphate-dependent decarboxylation of 2-oxoglutarate and the subsequent addition of the resulting succinic semialdehyde-thiamine pyrophosphate anion to isochorismate to yield 2-succinyl-5-enolpyruvyl-6-hydroxy-3-cyclohexene-1-carboxylate (SEPHCHC). This chain is 2-succinyl-5-enolpyruvyl-6-hydroxy-3-cyclohexene-1-carboxylate synthase, found in Escherichia coli O157:H7.